A 214-amino-acid chain; its full sequence is Probable transaldolase (214 aa).

The active-site Schiff-base intermediate with substrate is K83.

Belongs to the transaldolase family. Type 3B subfamily.

The protein resides in the cytoplasm. The catalysed reaction is D-sedoheptulose 7-phosphate + D-glyceraldehyde 3-phosphate = D-erythrose 4-phosphate + beta-D-fructose 6-phosphate. It participates in carbohydrate degradation; pentose phosphate pathway; D-glyceraldehyde 3-phosphate and beta-D-fructose 6-phosphate from D-ribose 5-phosphate and D-xylulose 5-phosphate (non-oxidative stage): step 2/3. Its function is as follows. Transaldolase is important for the balance of metabolites in the pentose-phosphate pathway. The polypeptide is Probable transaldolase (Leptospira biflexa serovar Patoc (strain Patoc 1 / Ames)).